The sequence spans 64 residues: Large ribosomal subunit protein bL33c (64 aa).

It belongs to the bacterial ribosomal protein bL33 family.

The protein localises to the plastid. Its subcellular location is the chloroplast. In Trieres chinensis (Marine centric diatom), this protein is Large ribosomal subunit protein bL33c (rpl33).